The following is a 371-amino-acid chain: Ribosomal RNA small subunit methyltransferase H (371 aa).

S-adenosyl-L-methionine is bound by residues 92–94, Asp-111, Tyr-138, Asp-159, and Gln-166; that span reads GGH.

Belongs to the methyltransferase superfamily. RsmH family.

The protein resides in the cytoplasm. It catalyses the reaction cytidine(1402) in 16S rRNA + S-adenosyl-L-methionine = N(4)-methylcytidine(1402) in 16S rRNA + S-adenosyl-L-homocysteine + H(+). In terms of biological role, specifically methylates the N4 position of cytidine in position 1402 (C1402) of 16S rRNA. The polypeptide is Ribosomal RNA small subunit methyltransferase H (Mycolicibacterium gilvum (strain PYR-GCK) (Mycobacterium gilvum (strain PYR-GCK))).